Here is a 406-residue protein sequence, read N- to C-terminus: 2,3-bisphosphoglycerate-independent phosphoglycerate mutase (406 aa).

A disordered region spans residues 156 to 183 (NLSDKISDSDPHSEGKPPEPIRPLDPSA). Over residues 160 to 174 (KISDSDPHSEGKPPE) the composition is skewed to basic and acidic residues.

Belongs to the BPG-independent phosphoglycerate mutase family. A-PGAM subfamily.

It carries out the reaction (2R)-2-phosphoglycerate = (2R)-3-phosphoglycerate. It participates in carbohydrate degradation; glycolysis; pyruvate from D-glyceraldehyde 3-phosphate: step 3/5. In terms of biological role, catalyzes the interconversion of 2-phosphoglycerate and 3-phosphoglycerate. The polypeptide is 2,3-bisphosphoglycerate-independent phosphoglycerate mutase (Thermoplasma volcanium (strain ATCC 51530 / DSM 4299 / JCM 9571 / NBRC 15438 / GSS1)).